The chain runs to 609 residues: Non-structural glycoprotein (609 aa).

Residues 1 to 24 (MDFLRQCTLIQVMILAITIRLTHG) form the signal peptide. The Extracellular segment spans residues 25 to 581 (GWTNFPESCV…EKDYWHEEYN (557 aa)). N-linked (GlcNAc...) asparagine; by host glycosylation is found at asparagine 87, asparagine 375, asparagine 465, asparagine 472, asparagine 478, asparagine 506, asparagine 529, asparagine 551, and asparagine 562. Residues 582–599 (MWGLSGLSFLLLLALFYN) traverse the membrane as a helical segment. Residues 600–609 (KIKRKIKRKS) are Cytoplasmic-facing.

Belongs to the ephemerovirus glycoprotein family.

The protein localises to the membrane. The protein is Non-structural glycoprotein (GNS) of Adelaide River virus (ARV).